We begin with the raw amino-acid sequence, 251 residues long: Flap endonuclease Xni (251 aa).

Aspartate 104 serves as a coordination point for Mg(2+). In terms of domain architecture, 5'-3' exonuclease spans 160–249 (VQPQQLPDYW…IDGNLQQLRL (90 aa)). K(+)-binding residues include leucine 171, alanine 172, proline 180, valine 182, and isoleucine 185. Positions 184-189 (GIGPKS) are interaction with DNA.

Belongs to the Xni family. It depends on Mg(2+) as a cofactor. Requires K(+) as cofactor.

Its function is as follows. Has flap endonuclease activity. During DNA replication, flap endonucleases cleave the 5'-overhanging flap structure that is generated by displacement synthesis when DNA polymerase encounters the 5'-end of a downstream Okazaki fragment. This is Flap endonuclease Xni from Escherichia coli O6:K15:H31 (strain 536 / UPEC).